We begin with the raw amino-acid sequence, 456 residues long: Exodeoxyribonuclease 7 large subunit (456 aa).

Belongs to the XseA family. As to quaternary structure, heterooligomer composed of large and small subunits.

It is found in the cytoplasm. The enzyme catalyses Exonucleolytic cleavage in either 5'- to 3'- or 3'- to 5'-direction to yield nucleoside 5'-phosphates.. Bidirectionally degrades single-stranded DNA into large acid-insoluble oligonucleotides, which are then degraded further into small acid-soluble oligonucleotides. The sequence is that of Exodeoxyribonuclease 7 large subunit from Shigella flexneri serotype 5b (strain 8401).